Reading from the N-terminus, the 236-residue chain is MTETKEEKVHKVFEKISPSYDRMNSVISFKLHVKWRKETMKLMRVQKGTNVLDVCCGTADWSIMMAEEIGPEGHVTGLDFSENMLKVGREKVKEADLHNVELIHGNAMELPFPDNSFDYVTIGFGLRNVPDYMQVLREMYRVLKPGGQLACIDTSQPNIPGWKQVFNAYFRYVMPVFGKFFAKSYKEYSWLQESTREFPGMSKLAEMFQDAGFSYVRYISHSGGASATHFGFKKKE.

S-adenosyl-L-methionine is bound by residues Thr58, Asp79, and 106-107 (NA).

The protein belongs to the class I-like SAM-binding methyltransferase superfamily. MenG/UbiE family.

It carries out the reaction a 2-demethylmenaquinol + S-adenosyl-L-methionine = a menaquinol + S-adenosyl-L-homocysteine + H(+). The protein operates within quinol/quinone metabolism; menaquinone biosynthesis; menaquinol from 1,4-dihydroxy-2-naphthoate: step 2/2. Its function is as follows. Methyltransferase required for the conversion of demethylmenaquinol (DMKH2) to menaquinol (MKH2). This Listeria welshimeri serovar 6b (strain ATCC 35897 / DSM 20650 / CCUG 15529 / CIP 8149 / NCTC 11857 / SLCC 5334 / V8) protein is Demethylmenaquinone methyltransferase.